The following is a 421-amino-acid chain: MLKEEDKIFTNLHGQQSHDLKSSKKRGDWENTKALLDKGRDFIVEEVKKSGLRGRGGAGFSTGMKWSFMPKNLEKSCYLVVNADESEPGTCKDRDILRFEPHKLIEGCLLASFAIGANNCYIYIRGEFYNEASNIQRALDEAYKEGLIGKNSCGSGFDCNIYLHRGAGAYICGEETALLESLEGKKGMPRLKPPFPAGFGLYGCPTTINNVESIAVVPTILRRGASWFAGIGKPNNTGTKIFCISGHVNKPCNVEEAMGISLKELIEKYAGGVRGGWDNLKAIIPGGSSVPLLPKSLCEVDMDFDSLRTAGSGLGTGGIIVMDQSTDIIYAIARLSKFYMHESCGQCTPCREGTGWMWRVMMRLVKGNVTKSEIDELLNVTKAIEGHTICALGDAAAWPIQGLIRHFRSEIEARIKSYSVV.

54–63 (GRGGAGFSTG) provides a ligand contact to NAD(+). 166-213 (GAGAYICGEETALLESLEGKKGMPRLKPPFPAGFGLYGCPTTINNVES) contributes to the FMN binding site. 4 residues coordinate [4Fe-4S] cluster: C344, C347, C350, and C390.

This sequence belongs to the complex I 51 kDa subunit family. Requires FMN as cofactor. It depends on [4Fe-4S] cluster as a cofactor.

It carries out the reaction a quinone + NADH + 5 H(+)(in) = a quinol + NAD(+) + 4 H(+)(out). Its function is as follows. NDH-1 shuttles electrons from NADH, via FMN and iron-sulfur (Fe-S) centers, to quinones in the respiratory chain. Couples the redox reaction to proton translocation (for every two electrons transferred, four hydrogen ions are translocated across the cytoplasmic membrane), and thus conserves the redox energy in a proton gradient. This Rickettsia rickettsii (strain Sheila Smith) protein is NADH-quinone oxidoreductase subunit F (nuoF).